The following is a 386-amino-acid chain: LL-diaminopimelate aminotransferase (386 aa).

2 residues coordinate substrate: Y13 and G38. Residues Y67, 101-102 (SK), Y126, N176, Y207, and 235-237 (SLS) contribute to the pyridoxal 5'-phosphate site. Substrate contacts are provided by K102, Y126, and N176. At K238 the chain carries N6-(pyridoxal phosphate)lysine. Pyridoxal 5'-phosphate is bound at residue R246. Substrate is bound at residue R364.

This sequence belongs to the class-I pyridoxal-phosphate-dependent aminotransferase family. LL-diaminopimelate aminotransferase subfamily. Homodimer. Requires pyridoxal 5'-phosphate as cofactor.

The enzyme catalyses (2S,6S)-2,6-diaminopimelate + 2-oxoglutarate = (S)-2,3,4,5-tetrahydrodipicolinate + L-glutamate + H2O + H(+). It participates in amino-acid biosynthesis; L-lysine biosynthesis via DAP pathway; LL-2,6-diaminopimelate from (S)-tetrahydrodipicolinate (aminotransferase route): step 1/1. Its function is as follows. Involved in the synthesis of meso-diaminopimelate (m-DAP or DL-DAP), required for both lysine and peptidoglycan biosynthesis. Catalyzes the direct conversion of tetrahydrodipicolinate to LL-diaminopimelate. The protein is LL-diaminopimelate aminotransferase of Natranaerobius thermophilus (strain ATCC BAA-1301 / DSM 18059 / JW/NM-WN-LF).